A 102-amino-acid polypeptide reads, in one-letter code: Envelope protein US9 (102 aa).

The Intravirion segment spans residues 1–75 (MAGQNTMEGE…KIYHRKKFCY (75 aa)). Positions 14-15 (LL) match the Di-leucine internalization motif motif. An acidic region spans residues 41–55 (EKCYYSDSENETADE). Residues Ser46 and Ser48 each carry the phosphoserine; by host CK2 modification. Residues 76 to 96 (ITLIIVFVFAMTGAAFALGYI) traverse the membrane as a helical; Signal-anchor for type II membrane protein segment. Residues 97–102 (TSQFVG) lie on the Virion surface side of the membrane.

Belongs to the alphaherpesvirinae envelope protein US9 family. In terms of processing, phosphorylated on serines within the acidic cluster, possibly by host CK2. Phosphorylation determines whether endocytosed viral US9 traffics to the trans-Golgi network or recycles to the cell membrane.

It localises to the virion membrane. The protein resides in the host Golgi apparatus membrane. It is found in the host Golgi apparatus. The protein localises to the host trans-Golgi network. Its subcellular location is the host cell membrane. Functionally, essential for the anterograde spread of the infection throughout the host nervous system. Together with the gE/gI heterodimer, US9 is involved in the sorting and transport of viral structural components toward axon tips. This Varicella-zoster virus (strain Dumas) (HHV-3) protein is Envelope protein US9.